Here is a 187-residue protein sequence, read N- to C-terminus: Elongation factor P (187 aa).

The protein belongs to the elongation factor P family.

The protein resides in the cytoplasm. It participates in protein biosynthesis; polypeptide chain elongation. Involved in peptide bond synthesis. Stimulates efficient translation and peptide-bond synthesis on native or reconstituted 70S ribosomes in vitro. Probably functions indirectly by altering the affinity of the ribosome for aminoacyl-tRNA, thus increasing their reactivity as acceptors for peptidyl transferase. This is Elongation factor P from Thermodesulfovibrio yellowstonii (strain ATCC 51303 / DSM 11347 / YP87).